Here is a 288-residue protein sequence, read N- to C-terminus: uncharacterized protein (288 aa).

Residues 1–12 (MTEGRCAQHPDG) show a composition bias toward basic and acidic residues. The disordered stretch occupies residues 1–20 (MTEGRCAQHPDGLDVQDVCD).

It belongs to the class IV-like SAM-binding methyltransferase superfamily. RNA methyltransferase TrmH family.

This is an uncharacterized protein from Mycobacterium bovis (strain ATCC BAA-935 / AF2122/97).